Reading from the N-terminus, the 441-residue chain is MFS-type transporter (441 aa).

The segment at 1–47 (MPPQQEQDTDSDAIRSYNEESKSETPGCIPDAMLSSDETSNDVASDI) is disordered. 10 consecutive transmembrane segments (helical) span residues 61–81 (TLCG…FGIF), 95–115 (DISW…AFVG), 125–145 (LVLS…SLST), 150–170 (LILS…TPAV), 183–203 (LAIG…NSMA), 212–232 (FGWT…FVVV), 259–279 (FFTI…YYIA), 289–309 (TLTY…GVFG), 323–343 (LELL…WIAV), and 351–371 (VWTV…PAGI). An N-linked (GlcNAc...) asparagine glycan is attached at N388. 2 helical membrane-spanning segments follow: residues 389–409 (FTVI…IITA) and 415–435 (YGAQ…IVAA).

The protein belongs to the major facilitator superfamily. Monocarboxylate porter (TC 2.A.1.13) family.

Its subcellular location is the membrane. Functionally, MFS-type transporter; part of the gene cluster that mediates the biosynthesis of butenolide, a mycotoxin that shows antibiotic activity but does not seem to play a major role in the spread of head blight in wheat. The sequence is that of MFS-type transporter from Gibberella zeae (strain ATCC MYA-4620 / CBS 123657 / FGSC 9075 / NRRL 31084 / PH-1) (Wheat head blight fungus).